We begin with the raw amino-acid sequence, 227 residues long: Cytochrome c oxidase subunit 2 (227 aa).

Topologically, residues 1 to 14 are mitochondrial intermembrane; the sequence is MAYPFELGFQDATS. Residues 15–45 traverse the membrane as a helical segment; that stretch reads PIMEELLHFHDHTLMIVFLISSLVLYIISLM. Residues 46–59 are Mitochondrial matrix-facing; the sequence is LTTKLTHTSTMDAQ. The helical transmembrane segment at 60-87 threads the bilayer; that stretch reads EVETIWTILPAIILILIALPSLRVLYMM. The Mitochondrial intermembrane segment spans residues 88 to 227; it reads DEINDPSLTV…HFENWSSSML (140 aa). His-161, Cys-196, Glu-198, Cys-200, His-204, and Met-207 together coordinate Cu cation. Residue Glu-198 participates in Mg(2+) binding.

This sequence belongs to the cytochrome c oxidase subunit 2 family. Component of the cytochrome c oxidase (complex IV, CIV), a multisubunit enzyme composed of 14 subunits. The complex is composed of a catalytic core of 3 subunits MT-CO1, MT-CO2 and MT-CO3, encoded in the mitochondrial DNA, and 11 supernumerary subunits COX4I, COX5A, COX5B, COX6A, COX6B, COX6C, COX7A, COX7B, COX7C, COX8 and NDUFA4, which are encoded in the nuclear genome. The complex exists as a monomer or a dimer and forms supercomplexes (SCs) in the inner mitochondrial membrane with NADH-ubiquinone oxidoreductase (complex I, CI) and ubiquinol-cytochrome c oxidoreductase (cytochrome b-c1 complex, complex III, CIII), resulting in different assemblies (supercomplex SCI(1)III(2)IV(1) and megacomplex MCI(2)III(2)IV(2)). Found in a complex with TMEM177, COA6, COX18, COX20, SCO1 and SCO2. Interacts with TMEM177 in a COX20-dependent manner. Interacts with COX20. Interacts with COX16. Cu cation serves as cofactor.

The protein resides in the mitochondrion inner membrane. It carries out the reaction 4 Fe(II)-[cytochrome c] + O2 + 8 H(+)(in) = 4 Fe(III)-[cytochrome c] + 2 H2O + 4 H(+)(out). Functionally, component of the cytochrome c oxidase, the last enzyme in the mitochondrial electron transport chain which drives oxidative phosphorylation. The respiratory chain contains 3 multisubunit complexes succinate dehydrogenase (complex II, CII), ubiquinol-cytochrome c oxidoreductase (cytochrome b-c1 complex, complex III, CIII) and cytochrome c oxidase (complex IV, CIV), that cooperate to transfer electrons derived from NADH and succinate to molecular oxygen, creating an electrochemical gradient over the inner membrane that drives transmembrane transport and the ATP synthase. Cytochrome c oxidase is the component of the respiratory chain that catalyzes the reduction of oxygen to water. Electrons originating from reduced cytochrome c in the intermembrane space (IMS) are transferred via the dinuclear copper A center (CU(A)) of subunit 2 and heme A of subunit 1 to the active site in subunit 1, a binuclear center (BNC) formed by heme A3 and copper B (CU(B)). The BNC reduces molecular oxygen to 2 water molecules using 4 electrons from cytochrome c in the IMS and 4 protons from the mitochondrial matrix. The protein is Cytochrome c oxidase subunit 2 (MT-CO2) of Sciurus carolinensis (Eastern gray squirrel).